A 227-amino-acid polypeptide reads, in one-letter code: Paired immunoglobulin-like type 2 receptor beta (227 aa).

Residues 1 to 19 (MGRPLLLPLLLLLQPPAFL) form the signal peptide. The Extracellular segment spans residues 20 to 191 (QPGGSTGSGP…WHLSLDTAIR (172 aa)). One can recognise an Ig-like V-type domain in the interval 21–143 (PGGSTGSGPS…SGRQQLQSIK (123 aa)). An N-linked (GlcNAc...) asparagine glycan is attached at Asn100. The chain crosses the membrane as a helical span at residues 192–212 (VALAVAVLKTVILGLLCLLLL). The Cytoplasmic portion of the chain corresponds to 213–227 (WWRRRKGSRAPSSDF).

Its subcellular location is the membrane. Paired receptors consist of highly related activating and inhibitory receptors and are widely involved in the regulation of the immune system. PILRB is thought to act as a cellular signaling activating receptor that associates with ITAM-bearing adapter molecules on the cell surface. The sequence is that of Paired immunoglobulin-like type 2 receptor beta (PILRB) from Homo sapiens (Human).